The following is a 714-amino-acid chain: Fatty acid oxidation complex subunit alpha (714 aa).

Positions 1–190 are enoyl-CoA hydratase; the sequence is MEMASVFTLN…KLGLVDDVVP (190 aa). Residues 306 to 714 form a 3-hydroxyacyl-CoA dehydrogenase region; the sequence is APLNSVGILG…FWKTTATDLQ (409 aa).

This sequence in the N-terminal section; belongs to the enoyl-CoA hydratase/isomerase family. The protein in the central section; belongs to the 3-hydroxyacyl-CoA dehydrogenase family. As to quaternary structure, heterotetramer of two alpha chains (FadJ) and two beta chains (FadI).

It localises to the cytoplasm. It catalyses the reaction a (3S)-3-hydroxyacyl-CoA = a (2E)-enoyl-CoA + H2O. The catalysed reaction is a 4-saturated-(3S)-3-hydroxyacyl-CoA = a (3E)-enoyl-CoA + H2O. It carries out the reaction a (3S)-3-hydroxyacyl-CoA + NAD(+) = a 3-oxoacyl-CoA + NADH + H(+). The enzyme catalyses (3S)-3-hydroxybutanoyl-CoA = (3R)-3-hydroxybutanoyl-CoA. The protein operates within lipid metabolism; fatty acid beta-oxidation. In terms of biological role, catalyzes the formation of a hydroxyacyl-CoA by addition of water on enoyl-CoA. Also exhibits 3-hydroxyacyl-CoA epimerase and 3-hydroxyacyl-CoA dehydrogenase activities. This Escherichia coli O139:H28 (strain E24377A / ETEC) protein is Fatty acid oxidation complex subunit alpha.